Here is an 86-residue protein sequence, read N- to C-terminus: Protein Vpu (86 aa).

At 1–12 (MVDLLAKVDYRI) the chain is on the extracellular side. The helical transmembrane segment at 13–33 (VIVAFIVALIIAIVVWTIAYI) threads the bilayer. Residues 34–86 (EYRKLLRQRRIDRLIKRTRERAEDSGNESDGDTEELSTMVDMGNLRLLDVNDL) lie on the Cytoplasmic side of the membrane. The disordered stretch occupies residues 52 to 71 (RERAEDSGNESDGDTEELST). Residues S58 and S62 each carry the phosphoserine; by host CK2 modification. Over residues 58–68 (SGNESDGDTEE) the composition is skewed to acidic residues.

The protein belongs to the HIV-1 VPU protein family. In terms of assembly, homopentamer. Interacts with host CD4 and BRTC; these interactions induce proteasomal degradation of CD4. Interacts with host BST2; this interaction leads to the degradation of host BST2. Interacts with host FBXW11. Interacts with host AP1M1; this interaction plays a role in the mistrafficking and subsequent degradation of host BST2. Interacts with host RANBP2; this interaction allows Vpu to down-regulate host BLM sumoylation. Post-translationally, phosphorylated by host CK2. This phosphorylation is necessary for interaction with human BTRC and degradation of CD4.

The protein resides in the host membrane. Its activity is regulated as follows. Ion channel activity is inhibited by hexamethylene amiloride in vitro. Enhances virion budding by targeting host CD4 and Tetherin/BST2 to proteasome degradation. Degradation of CD4 prevents any unwanted premature interactions between viral Env and its host receptor CD4 in the endoplasmic reticulum. Degradation of antiretroviral protein Tetherin/BST2 is important for virion budding, as BST2 tethers new viral particles to the host cell membrane. Mechanistically, Vpu bridges either CD4 or BST2 to BTRC, a substrate recognition subunit of the Skp1/Cullin/F-box protein E3 ubiquitin ligase, induces their ubiquitination and subsequent proteasomal degradation. The alteration of the E3 ligase specificity by Vpu seems to promote the degradation of host IKBKB, leading to NF-kappa-B down-regulation and subsequent apoptosis. Acts as a viroporin that forms an oligomeric ion channel in membranes. Modulates the host DNA repair mechanisms to promote degradation of nuclear viral cDNA in cells that are already productively infected in order to suppress immune sensing and proviral hyper-integration (superinfection). Manipulates PML-NBs and modulates SUMOylation of host BLM protein thereby enhancing its DNA-end processing activity toward viral unintegrated linear DNA. Also inhibits RAD52-mediated homologous repair of viral cDNA, preventing the generation of dead-end circular forms of single copies of the long terminal repeat and permitting sustained nucleolytic attack. The chain is Protein Vpu from Homo sapiens (Human).